We begin with the raw amino-acid sequence, 493 residues long: Cysteine--tRNA ligase (493 aa).

Cys29 provides a ligand contact to Zn(2+). A 'HIGH' region motif is present at residues 31–41; that stretch reads PTVYDFAHIGN. Residues Cys227, His252, and Glu256 each coordinate Zn(2+). Positions 285-289 match the 'KMSKS' region motif; sequence KMSKS. ATP is bound at residue Lys288.

Belongs to the class-I aminoacyl-tRNA synthetase family. Monomer. The cofactor is Zn(2+).

It localises to the cytoplasm. It catalyses the reaction tRNA(Cys) + L-cysteine + ATP = L-cysteinyl-tRNA(Cys) + AMP + diphosphate. This chain is Cysteine--tRNA ligase, found in Rhodopseudomonas palustris (strain HaA2).